An 861-amino-acid polypeptide reads, in one-letter code: DNA topoisomerase 1 (861 aa).

One can recognise a Toprim domain in the interval 3-141 (KSLVIVESPA…KFSRVVFNEI (139 aa)). Positions 9 and 110 each coordinate Mg(2+). The region spanning 157–572 (NMNRVHAQQA…DFFKKFSEQL (416 aa)) is the Topo IA-type catalytic domain. Residues 191-196 (SAGRVQ) are interaction with DNA. Catalysis depends on Y318, which acts as the O-(5'-phospho-DNA)-tyrosine intermediate. C4-type zinc fingers lie at residues 596–628 (CPIC…KKRC), 658–685 (CDIC…NPSC), and 707–732 (CEKC…NKIC).

Belongs to the type IA topoisomerase family. As to quaternary structure, monomer. Mg(2+) serves as cofactor.

The catalysed reaction is ATP-independent breakage of single-stranded DNA, followed by passage and rejoining.. In terms of biological role, releases the supercoiling and torsional tension of DNA, which is introduced during the DNA replication and transcription, by transiently cleaving and rejoining one strand of the DNA duplex. Introduces a single-strand break via transesterification at a target site in duplex DNA. The scissile phosphodiester is attacked by the catalytic tyrosine of the enzyme, resulting in the formation of a DNA-(5'-phosphotyrosyl)-enzyme intermediate and the expulsion of a 3'-OH DNA strand. The free DNA strand then undergoes passage around the unbroken strand, thus removing DNA supercoils. Finally, in the religation step, the DNA 3'-OH attacks the covalent intermediate to expel the active-site tyrosine and restore the DNA phosphodiester backbone. This chain is DNA topoisomerase 1, found in Buchnera aphidicola subsp. Acyrthosiphon pisum (strain APS) (Acyrthosiphon pisum symbiotic bacterium).